A 469-amino-acid polypeptide reads, in one-letter code: Ubiquitin carboxyl-terminal hydrolase MINDY-1 (469 aa).

The disordered stretch occupies residues 1 to 105 (MEHHQPEHPA…RLQELPQSPR (105 aa)). Basic and acidic residues predominate over residues 23-44 (ENHKVLSEPKEHPQDKDAKEAD). Serine 103 is modified (phosphoserine). Cysteine 137 (nucleophile) is an active-site residue. The active-site Proton acceptor is the histidine 319. Residues 388–428 (QVDQDYLIALSLQQQQPPPQGTSGLSDLELAQQLQQEEYQQ) form a ubiquitin-binding domain (UBD) region. Positions 401-469 (QQQPPPQGTS…PKQESDCVLL (69 aa)) are disordered. A compositionally biased stretch (low complexity) spans 415–448 (LELAQQLQQEEYQQHQAAQAAPARAPSPQGRGAA). Serine 441 is subject to Phosphoserine. A compositionally biased stretch (basic and acidic residues) spans 453-469 (AAERRQRPKQESDCVLL).

It belongs to the MINDY deubiquitinase family. FAM63 subfamily.

The enzyme catalyses Thiol-dependent hydrolysis of ester, thioester, amide, peptide and isopeptide bonds formed by the C-terminal Gly of ubiquitin (a 76-residue protein attached to proteins as an intracellular targeting signal).. Its function is as follows. Hydrolase that can specifically remove 'Lys-48'-linked conjugated ubiquitin from proteins. Has exodeubiquitinase activity and has a preference for long polyubiquitin chains. May play a regulatory role at the level of protein turnover. The chain is Ubiquitin carboxyl-terminal hydrolase MINDY-1 (MINDY1) from Bos taurus (Bovine).